Reading from the N-terminus, the 379-residue chain is Acetylornithine aminotransferase (379 aa).

Residues 93-94 (GA) and Phe-120 each bind pyridoxal 5'-phosphate. Residue Arg-123 participates in N(2)-acetyl-L-ornithine binding. 205–208 (DEVQ) is a pyridoxal 5'-phosphate binding site. An N6-(pyridoxal phosphate)lysine modification is found at Lys-234. Ser-262 lines the N(2)-acetyl-L-ornithine pocket. A pyridoxal 5'-phosphate-binding site is contributed by Thr-263.

This sequence belongs to the class-III pyridoxal-phosphate-dependent aminotransferase family. ArgD subfamily. As to quaternary structure, homodimer. Requires pyridoxal 5'-phosphate as cofactor.

The protein localises to the cytoplasm. It carries out the reaction N(2)-acetyl-L-ornithine + 2-oxoglutarate = N-acetyl-L-glutamate 5-semialdehyde + L-glutamate. The protein operates within amino-acid biosynthesis; L-arginine biosynthesis; N(2)-acetyl-L-ornithine from L-glutamate: step 4/4. This is Acetylornithine aminotransferase from Streptococcus mutans serotype c (strain ATCC 700610 / UA159).